The primary structure comprises 224 residues: Urease accessory protein UreF (224 aa).

Belongs to the UreF family. In terms of assembly, ureD, UreF and UreG form a complex that acts as a GTP-hydrolysis-dependent molecular chaperone, activating the urease apoprotein by helping to assemble the nickel containing metallocenter of UreC. The UreE protein probably delivers the nickel.

It localises to the cytoplasm. Required for maturation of urease via the functional incorporation of the urease nickel metallocenter. The sequence is that of Urease accessory protein UreF from Pseudomonas savastanoi pv. phaseolicola (strain 1448A / Race 6) (Pseudomonas syringae pv. phaseolicola (strain 1448A / Race 6)).